A 96-amino-acid polypeptide reads, in one-letter code: Co-chaperonin GroES (96 aa).

This sequence belongs to the GroES chaperonin family. As to quaternary structure, heptamer of 7 subunits arranged in a ring. Interacts with the chaperonin GroEL.

The protein localises to the cytoplasm. Together with the chaperonin GroEL, plays an essential role in assisting protein folding. The GroEL-GroES system forms a nano-cage that allows encapsulation of the non-native substrate proteins and provides a physical environment optimized to promote and accelerate protein folding. GroES binds to the apical surface of the GroEL ring, thereby capping the opening of the GroEL channel. The chain is Co-chaperonin GroES from Polynucleobacter asymbioticus (strain DSM 18221 / CIP 109841 / QLW-P1DMWA-1) (Polynucleobacter necessarius subsp. asymbioticus).